We begin with the raw amino-acid sequence, 184 residues long: Peptide deformylase (184 aa).

Fe cation is bound by residues Cys-98 and His-140. The active site involves Glu-141. His-144 contacts Fe cation.

The protein belongs to the polypeptide deformylase family. Fe(2+) serves as cofactor.

It carries out the reaction N-terminal N-formyl-L-methionyl-[peptide] + H2O = N-terminal L-methionyl-[peptide] + formate. Removes the formyl group from the N-terminal Met of newly synthesized proteins. Requires at least a dipeptide for an efficient rate of reaction. N-terminal L-methionine is a prerequisite for activity but the enzyme has broad specificity at other positions. The chain is Peptide deformylase from Phocaeicola vulgatus (strain ATCC 8482 / DSM 1447 / JCM 5826 / CCUG 4940 / NBRC 14291 / NCTC 11154) (Bacteroides vulgatus).